Reading from the N-terminus, the 112-residue chain is Colipase (112 aa).

Positions 1 to 17 (MEKVLALLLVTLTVAYA) are cleaved as a signal peptide. A propeptide spans 18–22 (VPDPR) (enterostatin, activation peptide). Cystine bridges form between cysteine 34-cysteine 45, cysteine 40-cysteine 56, cysteine 44-cysteine 78, cysteine 66-cysteine 86, and cysteine 80-cysteine 104.

The protein belongs to the colipase family. In terms of assembly, forms a 1:1 stoichiometric complex with pancreatic lipase. In terms of tissue distribution, expressed by the pancreas.

It localises to the secreted. Colipase is a cofactor of pancreatic lipase. It allows the lipase to anchor itself to the lipid-water interface. Without colipase the enzyme is washed off by bile salts, which have an inhibitory effect on the lipase. Its function is as follows. Enterostatin has a biological activity as a satiety signal. This Sus scrofa (Pig) protein is Colipase (CLPS).